The following is a 688-amino-acid chain: Elongation factor G (688 aa).

Residues 6–280 (KLFRNFGIMA…AVVDFLPSPI (275 aa)) enclose the tr-type G domain. GTP is bound by residues 15–22 (AHIDAGKT), 79–83 (DTPGH), and 133–136 (NKMD).

This sequence belongs to the TRAFAC class translation factor GTPase superfamily. Classic translation factor GTPase family. EF-G/EF-2 subfamily.

It is found in the cytoplasm. Functionally, catalyzes the GTP-dependent ribosomal translocation step during translation elongation. During this step, the ribosome changes from the pre-translocational (PRE) to the post-translocational (POST) state as the newly formed A-site-bound peptidyl-tRNA and P-site-bound deacylated tRNA move to the P and E sites, respectively. Catalyzes the coordinated movement of the two tRNA molecules, the mRNA and conformational changes in the ribosome. This Ureaplasma urealyticum serovar 10 (strain ATCC 33699 / Western) protein is Elongation factor G.